Reading from the N-terminus, the 142-residue chain is FAD synthase (142 aa).

Residues 9–10 (VF), 14–17 (HLGH), D93, and Y120 contribute to the ATP site.

The protein belongs to the archaeal FAD synthase family. In terms of assembly, homodimer. The cofactor is a divalent metal cation.

It carries out the reaction FMN + ATP + H(+) = FAD + diphosphate. The protein operates within cofactor biosynthesis; FAD biosynthesis; FAD from FMN: step 1/1. Catalyzes the transfer of the AMP portion of ATP to flavin mononucleotide (FMN) to produce flavin adenine dinucleotide (FAD) coenzyme. This chain is FAD synthase, found in Thermoplasma acidophilum (strain ATCC 25905 / DSM 1728 / JCM 9062 / NBRC 15155 / AMRC-C165).